Consider the following 162-residue polypeptide: 2-C-methyl-D-erythritol 2,4-cyclodiphosphate synthase (162 aa).

The a divalent metal cation site is built by aspartate 8 and histidine 10. Residues 8-10 (DVH) and 36-37 (HS) contribute to the 4-CDP-2-C-methyl-D-erythritol 2-phosphate site. Histidine 44 lines the a divalent metal cation pocket. 4-CDP-2-C-methyl-D-erythritol 2-phosphate-binding positions include 58 to 60 (DIG), 63 to 67 (FPDTD), 102 to 108 (AQAPKMA), 134 to 137 (TTTE), phenylalanine 141, and arginine 144.

It belongs to the IspF family. Homotrimer. The cofactor is a divalent metal cation.

It catalyses the reaction 4-CDP-2-C-methyl-D-erythritol 2-phosphate = 2-C-methyl-D-erythritol 2,4-cyclic diphosphate + CMP. It functions in the pathway isoprenoid biosynthesis; isopentenyl diphosphate biosynthesis via DXP pathway; isopentenyl diphosphate from 1-deoxy-D-xylulose 5-phosphate: step 4/6. In terms of biological role, involved in the biosynthesis of isopentenyl diphosphate (IPP) and dimethylallyl diphosphate (DMAPP), two major building blocks of isoprenoid compounds. Catalyzes the conversion of 4-diphosphocytidyl-2-C-methyl-D-erythritol 2-phosphate (CDP-ME2P) to 2-C-methyl-D-erythritol 2,4-cyclodiphosphate (ME-CPP) with a corresponding release of cytidine 5-monophosphate (CMP). This is 2-C-methyl-D-erythritol 2,4-cyclodiphosphate synthase from Yersinia pseudotuberculosis serotype O:1b (strain IP 31758).